The chain runs to 275 residues: Large ribosomal subunit protein uL2 (275 aa).

Polar residues predominate over residues 38–53 (NSKAGRNNNGRITTRH). 2 disordered regions span residues 38–59 (NSKA…GGHK) and 224–257 (AMNP…KGFR).

It belongs to the universal ribosomal protein uL2 family. Part of the 50S ribosomal subunit. Forms a bridge to the 30S subunit in the 70S ribosome.

Its function is as follows. One of the primary rRNA binding proteins. Required for association of the 30S and 50S subunits to form the 70S ribosome, for tRNA binding and peptide bond formation. It has been suggested to have peptidyltransferase activity; this is somewhat controversial. Makes several contacts with the 16S rRNA in the 70S ribosome. The protein is Large ribosomal subunit protein uL2 of Burkholderia thailandensis (strain ATCC 700388 / DSM 13276 / CCUG 48851 / CIP 106301 / E264).